Consider the following 382-residue polypeptide: Mannitol-1-phosphate 5-dehydrogenase (382 aa).

NAD(+) is bound at residue 3–14 (ALHFGAGNIGRG).

The protein belongs to the mannitol dehydrogenase family.

It carries out the reaction D-mannitol 1-phosphate + NAD(+) = beta-D-fructose 6-phosphate + NADH + H(+). The protein is Mannitol-1-phosphate 5-dehydrogenase of Salmonella paratyphi A (strain ATCC 9150 / SARB42).